The sequence spans 123 residues: Large ribosomal subunit protein bL12 (123 aa).

Belongs to the bacterial ribosomal protein bL12 family. As to quaternary structure, homodimer. Part of the ribosomal stalk of the 50S ribosomal subunit. Forms a multimeric L10(L12)X complex, where L10 forms an elongated spine to which 2 to 4 L12 dimers bind in a sequential fashion. Binds GTP-bound translation factors.

Functionally, forms part of the ribosomal stalk which helps the ribosome interact with GTP-bound translation factors. Is thus essential for accurate translation. The polypeptide is Large ribosomal subunit protein bL12 (Neisseria gonorrhoeae (strain NCCP11945)).